Reading from the N-terminus, the 244-residue chain is Venom nerve growth factor (244 aa).

The first 18 residues, 1–18, serve as a signal peptide directing secretion; that stretch reads MSMLCYTLIIAFLIGIWA. The propeptide occupies 19 to 125; sequence APKSEDNVSL…SLNRNIRAKR (107 aa). Cystine bridges form between cysteine 139–cysteine 204, cysteine 182–cysteine 232, and cysteine 192–cysteine 234. Asparagine 148 carries an N-linked (GlcNAc...) asparagine glycan.

It belongs to the NGF-beta family. As to quaternary structure, homodimer; non-covalently linked. Post-translationally, N-glycosylated. As to expression, expressed by the venom gland.

It is found in the secreted. Nerve growth factor is important for the development and maintenance of the sympathetic and sensory nervous systems. It stimulates division and differentiation of sympathetic and embryonic sensory neurons as well as basal forebrain cholinergic neurons in the brain. Its relevance in the snake venom is not clear. However, it has been shown to inhibit metalloproteinase-dependent proteolysis of platelet glycoprotein Ib alpha, suggesting a metalloproteinase inhibition to prevent metalloprotease autodigestion and/or protection against prey proteases. Binds a lipid between the two protein chains in the homodimer. The lipid-bound form promotes histamine relase from mouse mast cells, contrary to the lipid-free form. It promotes neurite outgrowth in rat PC12 pheochromocytoma cells. The sequence is that of Venom nerve growth factor from Macrovipera lebetinus (Levantine viper).